Reading from the N-terminus, the 182-residue chain is Adenine phosphoribosyltransferase (182 aa).

Belongs to the purine/pyrimidine phosphoribosyltransferase family. In terms of assembly, homodimer.

The protein localises to the cytoplasm. It carries out the reaction AMP + diphosphate = 5-phospho-alpha-D-ribose 1-diphosphate + adenine. It participates in purine metabolism; AMP biosynthesis via salvage pathway; AMP from adenine: step 1/1. Its function is as follows. Catalyzes a salvage reaction resulting in the formation of AMP, that is energically less costly than de novo synthesis. This chain is Adenine phosphoribosyltransferase, found in Campylobacter hominis (strain ATCC BAA-381 / DSM 21671 / CCUG 45161 / LMG 19568 / NCTC 13146 / CH001A).